The sequence spans 224 residues: Transposase for insertion sequence-like element IS431mec (224 aa).

The H-T-H motif DNA-binding region spans glutamate 33 to glutamine 52. The Integrase catalytic domain maps to tryptophan 73 to leucine 222.

Functionally, involved in the transposition of the insertion sequence. The polypeptide is Transposase for insertion sequence-like element IS431mec (tnp) (Staphylococcus aureus (strain NCTC 8325 / PS 47)).